A 329-amino-acid polypeptide reads, in one-letter code: 4-hydroxythreonine-4-phosphate dehydrogenase (329 aa).

The substrate site is built by histidine 136 and threonine 137. A divalent metal cation is bound by residues histidine 166, histidine 211, and histidine 266. Residues lysine 274, asparagine 283, and arginine 292 each contribute to the substrate site.

Belongs to the PdxA family. As to quaternary structure, homodimer. The cofactor is Zn(2+). Mg(2+) serves as cofactor. Requires Co(2+) as cofactor.

Its subcellular location is the cytoplasm. The catalysed reaction is 4-(phosphooxy)-L-threonine + NAD(+) = 3-amino-2-oxopropyl phosphate + CO2 + NADH. It participates in cofactor biosynthesis; pyridoxine 5'-phosphate biosynthesis; pyridoxine 5'-phosphate from D-erythrose 4-phosphate: step 4/5. In terms of biological role, catalyzes the NAD(P)-dependent oxidation of 4-(phosphooxy)-L-threonine (HTP) into 2-amino-3-oxo-4-(phosphooxy)butyric acid which spontaneously decarboxylates to form 3-amino-2-oxopropyl phosphate (AHAP). This chain is 4-hydroxythreonine-4-phosphate dehydrogenase, found in Shigella boydii serotype 4 (strain Sb227).